The following is a 932-amino-acid chain: Lon protease homolog 2, peroxisomal (932 aa).

The Lon N-terminal domain maps to 11-259; the sequence is LALVPLPKGS…RVVELLARQV (249 aa). Positions 304–340 are disordered; the sequence is TGLTPPGAAGGRNNEDEKETNEVDELQKRLQEAELSP. Residues 328–340 show a composition bias toward basic and acidic residues; sequence ELQKRLQEAELSP. Position 486 to 493 (486 to 493) interacts with ATP; sequence GPPGTGKT. One can recognise a Lon proteolytic domain in the interval 729–916; sequence HGRPGVVTGL…WEAIRQVWPG (188 aa). Catalysis depends on residues Ser822 and Lys865. The Microbody targeting signal motif lies at 930 to 932; the sequence is SRL.

It belongs to the peptidase S16 family.

The protein resides in the peroxisome matrix. The enzyme catalyses Hydrolysis of proteins in presence of ATP.. Functionally, ATP-dependent serine protease that mediates the selective degradation of misfolded and unassembled polypeptides in the peroxisomal matrix. Necessary for type 2 peroxisome targeting signal (PTS2)-containing protein processing and facilitates peroxisome matrix protein import. This is Lon protease homolog 2, peroxisomal from Aspergillus fumigatus (strain ATCC MYA-4609 / CBS 101355 / FGSC A1100 / Af293) (Neosartorya fumigata).